The primary structure comprises 203 residues: Large ribosomal subunit protein bL25 (203 aa).

Belongs to the bacterial ribosomal protein bL25 family. CTC subfamily. As to quaternary structure, part of the 50S ribosomal subunit; part of the 5S rRNA/L5/L18/L25 subcomplex. Contacts the 5S rRNA. Binds to the 5S rRNA independently of L5 and L18.

In terms of biological role, this is one of the proteins that binds to the 5S RNA in the ribosome where it forms part of the central protuberance. In Rickettsia rickettsii (strain Iowa), this protein is Large ribosomal subunit protein bL25.